We begin with the raw amino-acid sequence, 124 residues long: MVKLTSIAAGVAAIAAGVAAAPATTTLSPSDERVNLVELGVYVSDIRAHLAQYYLFQAAHPSETYPVEIAEAVFNYGDFTTMLTGIPAEQVTRVITGVPWYSTRLRPAISSALSKDGIYTAIPK.

Residues 1–20 form the signal peptide; that stretch reads MVKLTSIAAGVAAIAAGVAA.

It belongs to the SRP1/TIP1 family. Seripauperin subfamily.

In Saccharomyces cerevisiae (strain ATCC 204508 / S288c) (Baker's yeast), this protein is Seripauperin-15 (PAU15).